Reading from the N-terminus, the 264-residue chain is Putative hydro-lyase Bpet2233 (264 aa).

The protein belongs to the D-glutamate cyclase family.

The sequence is that of Putative hydro-lyase Bpet2233 from Bordetella petrii (strain ATCC BAA-461 / DSM 12804 / CCUG 43448).